A 680-amino-acid polypeptide reads, in one-letter code: Anosmin-1 (680 aa).

The N-terminal stretch at 1–24 (MVPGVPGAVLTLCLWLAASSGCLA) is a signal peptide. Disulfide bonds link Cys49–Cys83, Cys53–Cys77, Cys86–Cys105, Cys90–Cys101, and Cys116–Cys120. Residue Asn71 is glycosylated (N-linked (GlcNAc...) asparagine). Residues 127–176 (LLVKQGDCPAPEKASGFAAACVESCEVDNECSGVKKCCSNGCGHTCQVPK) enclose the WAP domain. 4 consecutive Fibronectin type-III domains span residues 186-287 (PRKE…SKDP), 292-400 (APAN…THAT), 425-523 (PTRP…TPPC), and 550-658 (KPEN…LPPS). Asn209, Asn300, Asn470, Asn553, and Asn564 each carry an N-linked (GlcNAc...) asparagine glycan. Residues 642-680 (EGPATIKTFRTPELPPSSAHRSHLKHRHPHHYKPSPERY) form a disordered region. The segment covering 661 to 674 (HRSHLKHRHPHHYK) has biased composition (basic residues).

As to quaternary structure, interacts with FGFR1; this interaction does not interfere with FGF2-binding to FGFR1. Binds heparin. Heparin may promote or interfere with ANOS1-FGFR1-FGF2 complex formation depending on the sequential order of its binding to the various constituents. For instance, heparin-ANOS1 interaction favors subsequent binding to pre-existing binary FGFR1-FGF2 complex, while heparin-FGF2 complex does not interact with ANOS1-FGFR1. N-glycosylated. Post-translationally, may be proteolytically cleaved at the cell surface and released from the cell surface. In terms of tissue distribution, expressed in the cerebellum (at protein level).

The protein localises to the cell membrane. It is found in the secreted. Its function is as follows. Has a dual branch-promoting and guidance activity, which may play an important role in the patterning of mitral and tufted cell collaterals to the olfactory cortex. Chemoattractant for fetal olfactory epithelial cells. The chain is Anosmin-1 from Homo sapiens (Human).